The following is a 4080-amino-acid chain: Hybrid PKS-NRPS synthetase poxE (4080 aa).

Residues 8–442 (REPIAIVGSG…GTNAHAIIEA (435 aa)) form the Ketosynthase family 3 (KS3) domain. Active-site for beta-ketoacyl synthase activity residues include Cys-181, His-320, and His-362. Positions 554–878 (VFTGQGAQWA…QRGMNDVEAM (325 aa)) are malonyl-CoA:ACP transacylase (MAT) domain. Residues 944 to 1078 (HPILGTRCPD…GRLVITYGPV (135 aa)) are N-terminal hotdog fold. One can recognise a PKS/mFAS DH domain in the interval 944–1246 (HPILGTRCPD…AVPLEATNAD (303 aa)). Positions 945-1243 (PILGTRCPDG…GIHAVPLEAT (299 aa)) are dehydratase (DH) domain. His-976 acts as the Proton acceptor; for dehydratase activity in catalysis. The interval 1093–1246 (MVDVPSERFY…AVPLEATNAD (154 aa)) is C-terminal hotdog fold. Asp-1152 (proton donor; for dehydratase activity) is an active-site residue. A methyltransferase (MT) domain region spans residues 1400-1585 (HFSDYLASVV…GVDTFTSDAD (186 aa)). The tract at residues 2118–2292 (TYWLVGLTGS…AGSVMNIGAI (175 aa)) is ketoreductase (KR)domain. Residues 2399-2478 (TTDEIYEVIK…TIGEIIKFVL (80 aa)) are peptidyl carrier protein. Residues 2405 to 2481 (EVIKECFIVK…EIIKFVLEKL (77 aa)) enclose the Carrier 1 domain. Ser-2441 carries the O-(pantetheine 4'-phosphoryl)serine modification. Positions 2488 to 2569 (SLGLSPPTGA…AASPSIHTEE (82 aa)) are disordered. The span at 2511-2525 (VVVERRNVPRLEKKI) shows a compositional bias: basic and acidic residues. Positions 2528–2545 (SAGSRTSSSVTGTSKSVS) are enriched in low complexity. Over residues 2551–2565 (DTASSQTSEAASPSI) the composition is skewed to polar residues. The interval 2607-3036 (KEPLSFGQSR…DSKQPGGHVS (430 aa)) is condensation. Positions 3069–3478 (DMAKQYPQKL…DGRLRIEGRI (410 aa)) are adenylation. One can recognise a Carrier 2 domain in the interval 3593 to 3673 (AHLNEAQAQM…KMALLIKPQE (81 aa)). The tract at residues 3598–3670 (AQAQMVQLWE…TLEKMALLIK (73 aa)) is thiolation. At Ser-3633 the chain carries O-(pantetheine 4'-phosphoryl)serine. A reductase (RED) domain region spans residues 3740–3959 (LTGATGFIGQ…DFVPVEQVVR (220 aa)).

This sequence in the C-terminal section; belongs to the NRP synthetase family.

Its pathway is secondary metabolite biosynthesis. Its function is as follows. Hybrid PKS-NRPS synthetase; part of the gene cluster that mediates the biosynthesis of oxaleimides, cytotoxic compounds containing an unusual disubstituted succinimide moiety. The first step of the pathway is provided by the HR-PKS poxF that serves in a new mode of collaborative biosynthesis with the PKS-NRPS poxE, by providing the olefin containing amino acid substrate via the synthesis of an ACP-bound dec-4-enoate. The cytochrome P450 monooxygenase poxM-catalyzed oxidation at the alpha-position creates the enzyme-bound 2-hydroxydec-4-enoyl-ACP thioester, which may be prone to spontaneous hydrolysis to yield 2-hydroxydec-4-enoic acid due to increased electrophilicity of the carbonyl. 2-hydroxydec-4-enoic acid can then be further oxidized by poxM to yield the alpha-ketoacid 2-oxodec-4-enoicacid, which is reductively aminated by the aminotransferase poxL to yield (S,E)-2-aminodec-4-enoic acid. The Hybrid PKS-NRPS synthetase poxE then performs condensation between the octaketide product of its PKS modules and the amino group of (S,E)-2-aminodec-4-enoic acid which is activated and incorporated by the adenylation domain. The resulting aminoacyl product can be cyclized by the Diels-Alderase PoxQ and reductively released by the reductive (R) domain of poxE to yield an aldehyde intermediate. The released aldehyde is then substrate for a Knoevenagel condensation by the hydrolyase poxO followed by an oxidation at the 5-position of the pyrrolidone ring. The presence of the olefin from the amino acid building block allows for migration of the substituted allyl group to occur. This allylic transposition reaction takes place in a conjugate addition, semipinacol-like fashion to yield a succinimide intermediate. Iterative two-electron oxidations of the C7 methyl of the succinimide intermediate to the carboxylic acid can be catalyzed by one of two remaining cytochrome P450 monooxygenasess poxC or poxD to yield oxaleimide A. Subsequent oxidation yields the maleimide scaffold oxaleimide I. Both oxaleimide A and oxaleimide I can undergo oxidative modifications in the decalin ring to yield the series of products oxaleimides B to H. In Penicillium oxalicum (strain 114-2 / CGMCC 5302) (Penicillium decumbens), this protein is Hybrid PKS-NRPS synthetase poxE.